We begin with the raw amino-acid sequence, 402 residues long: GTPase HflX (402 aa).

One can recognise a Hflx-type G domain in the interval 181–350 (DTVGLIGYTN…MIIEHLNLSI (170 aa)). Residues 187-194 (GYTNAGKT), 212-216 (FTTLT), 233-236 (DTVG), 300-303 (NKVD), and 328-330 (SAK) contribute to the GTP site. Mg(2+)-binding residues include Thr194 and Thr214.

Belongs to the TRAFAC class OBG-HflX-like GTPase superfamily. HflX GTPase family. Monomer. Associates with the 50S ribosomal subunit. Mg(2+) serves as cofactor.

It is found in the cytoplasm. GTPase that associates with the 50S ribosomal subunit and may have a role during protein synthesis or ribosome biogenesis. This chain is GTPase HflX, found in Methanocaldococcus jannaschii (strain ATCC 43067 / DSM 2661 / JAL-1 / JCM 10045 / NBRC 100440) (Methanococcus jannaschii).